A 242-amino-acid chain; its full sequence is Glucosamine-6-phosphate deaminase (242 aa).

The Proton acceptor; for enolization step role is filled by D67. The For ring-opening step role is filled by N136. The active-site Proton acceptor; for ring-opening step is the H138. Residue E143 is the For ring-opening step of the active site.

It belongs to the glucosamine/galactosamine-6-phosphate isomerase family. NagB subfamily.

It catalyses the reaction alpha-D-glucosamine 6-phosphate + H2O = beta-D-fructose 6-phosphate + NH4(+). Its pathway is amino-sugar metabolism; N-acetylneuraminate degradation; D-fructose 6-phosphate from N-acetylneuraminate: step 5/5. Catalyzes the reversible isomerization-deamination of glucosamine 6-phosphate (GlcN6P) to form fructose 6-phosphate (Fru6P) and ammonium ion. In Clostridium beijerinckii (strain ATCC 51743 / NCIMB 8052) (Clostridium acetobutylicum), this protein is Glucosamine-6-phosphate deaminase.